We begin with the raw amino-acid sequence, 315 residues long: Tetratricopeptide repeat protein 23-like (315 aa).

A disordered region spans residues 28–56 (KIPEHQRTDESSPTSGSEESEEDTKAKEK). Coiled coils occupy residues 65–90 (REKLAQSQKKIAQLIKGKKNIEANKE), 179–200 (REAYFNLQKSERNMKELRESYK), and 250–280 (SELVSLYQEIAQIEQLRRNHEQAIQYLHQAH).

The protein localises to the cytoplasm. It localises to the cytoskeleton. The protein resides in the microtubule organizing center. It is found in the centrosome. Its subcellular location is the spindle. The protein localises to the midbody. The chain is Tetratricopeptide repeat protein 23-like (TTC23L) from Bos taurus (Bovine).